The primary structure comprises 51 residues: Large ribosomal subunit protein eL39 (51 aa).

Residues 32 to 51 (KRRVTRSPTRRHWRRVKLKA) form a disordered region.

This sequence belongs to the eukaryotic ribosomal protein eL39 family.

In Pyrobaculum arsenaticum (strain DSM 13514 / JCM 11321 / PZ6), this protein is Large ribosomal subunit protein eL39.